A 66-amino-acid polypeptide reads, in one-letter code: Large ribosomal subunit protein bL35 (66 aa).

2 stretches are compositionally biased toward basic residues: residues 1–16 (MPKQKTHRGLAKRVKR) and 23–45 (KRGRAFTSHRFHGKTKKQRRQLR). Residues 1 to 53 (MPKQKTHRGLAKRVKRTGGGGLKRGRAFTSHRFHGKTKKQRRQLRKASMVAKG) form a disordered region.

It belongs to the bacterial ribosomal protein bL35 family.

In Enterococcus faecalis (strain ATCC 700802 / V583), this protein is Large ribosomal subunit protein bL35.